Here is a 324-residue protein sequence, read N- to C-terminus: NADH-ubiquinone oxidoreductase chain 1 (324 aa).

The next 8 helical transmembrane spans lie at 10–30 (MIMT…LTLV), 76–96 (FLFI…WIPL), 107–127 (LGLL…LWSG), 143–163 (VAQT…TIML), 178–198 (PIYL…STLA), 229–249 (LFFL…ITLF), 260–280 (ELFS…FLWV), and 300–320 (FLPL…SYAG).

This sequence belongs to the complex I subunit 1 family.

Its subcellular location is the mitochondrion inner membrane. The enzyme catalyses a ubiquinone + NADH + 5 H(+)(in) = a ubiquinol + NAD(+) + 4 H(+)(out). Core subunit of the mitochondrial membrane respiratory chain NADH dehydrogenase (Complex I) that is believed to belong to the minimal assembly required for catalysis. Complex I functions in the transfer of electrons from NADH to the respiratory chain. The immediate electron acceptor for the enzyme is believed to be ubiquinone. This chain is NADH-ubiquinone oxidoreductase chain 1 (MT-ND1), found in Excalfactoria chinensis (Blue-breasted quail).